We begin with the raw amino-acid sequence, 24 residues long: GLLTNVLGFLKKAGKGVLSGLLPL.

In terms of tissue distribution, expressed by the skin glands.

It localises to the secreted. Functionally, has antibacterial and antifungal activity. The chain is Caerulein precursor fragment B4 from Xenopus borealis (Kenyan clawed frog).